The following is a 473-amino-acid chain: Photosystem II CP43 reaction center protein (473 aa).

Positions methionine 1 to glutamate 14 are excised as a propeptide. N-acetylthreonine is present on threonine 15. Threonine 15 is modified (phosphothreonine). Helical transmembrane passes span leucine 69–alanine 93, leucine 134–serine 155, lysine 178–threonine 200, lysine 255–serine 275, and tryptophan 291–alanine 312. Glutamate 367 contributes to the [CaMn4O5] cluster binding site. Residues arginine 447 to proline 471 form a helical membrane-spanning segment.

This sequence belongs to the PsbB/PsbC family. PsbC subfamily. In terms of assembly, PSII is composed of 1 copy each of membrane proteins PsbA, PsbB, PsbC, PsbD, PsbE, PsbF, PsbH, PsbI, PsbJ, PsbK, PsbL, PsbM, PsbT, PsbX, PsbY, PsbZ, Psb30/Ycf12, at least 3 peripheral proteins of the oxygen-evolving complex and a large number of cofactors. It forms dimeric complexes. The cofactor is Binds multiple chlorophylls and provides some of the ligands for the Ca-4Mn-5O cluster of the oxygen-evolving complex. It may also provide a ligand for a Cl- that is required for oxygen evolution. PSII binds additional chlorophylls, carotenoids and specific lipids..

The protein localises to the plastid. It is found in the chloroplast thylakoid membrane. Its function is as follows. One of the components of the core complex of photosystem II (PSII). It binds chlorophyll and helps catalyze the primary light-induced photochemical processes of PSII. PSII is a light-driven water:plastoquinone oxidoreductase, using light energy to abstract electrons from H(2)O, generating O(2) and a proton gradient subsequently used for ATP formation. The polypeptide is Photosystem II CP43 reaction center protein (Cycas taitungensis (Prince sago)).